We begin with the raw amino-acid sequence, 108 residues long: Transcription initiation factor IIA subunit 2 (108 aa).

This sequence belongs to the TFIIA subunit 2 family. In terms of assembly, TFIIA is a heterodimer of the large unprocessed subunit 1 and a small subunit gamma. It was originally believed to be a heterotrimer of an alpha, a beta and a gamma subunit. Interacts with NCOA6 general coactivator. TFIIA forms a complex with TBP.

It localises to the nucleus. Functionally, TFIIA is a component of the transcription machinery of RNA polymerase II and plays an important role in transcriptional activation. TFIIA in a complex with TBP mediates transcriptional activity. The protein is Transcription initiation factor IIA subunit 2 (gtf2a2) of Oncorhynchus mykiss (Rainbow trout).